The primary structure comprises 1257 residues: Liprin-alpha-2 (1257 aa).

Positions 1–29 (MMCEVMPTINEDTPMSQRGSQSSGSDSDS) are disordered. Positions 16 to 26 (SQRGSQSSGSD) are enriched in low complexity. 2 coiled-coil regions span residues 29–154 (SHFE…SLRM) and 185–235 (KALD…SSEG). Serine 236 is modified (phosphoserine). Phosphothreonine is present on threonine 237. Residue serine 239 is modified to Phosphoserine. 2 coiled-coil regions span residues 264-541 (TDDT…SLIE) and 643-695 (HSDA…GLNL). The segment at 439–463 (GQLEEKNQELQRARQREKMNEEHNK) is disordered. 2 positions are modified to phosphoserine: serine 687 and serine 689. The segment covering 709 to 725 (TASSLASSSPPSGHSTP) has biased composition (low complexity). Disordered stretches follow at residues 709–738 (TASS…EMDR) and 759–834 (EEDG…KSSI). The span at 787-802 (TLPSSYHNDARSSLSA) shows a compositional bias: polar residues. Residues serine 817 and serine 820 each carry the phosphoserine modification. SAM domains are found at residues 898 to 964 (WDGP…MVSL), 1020 to 1084 (NHEW…LKRL), and 1108 to 1177 (WSND…LLAL). A coiled-coil region spans residues 1081–1107 (LKRLNYDRKELERRREASQHEIKDVLV).

This sequence belongs to the liprin family. Liprin-alpha subfamily. In terms of assembly, forms homodimers and heterodimers with liprins-alpha and liprins-beta. Interacts with the second PTPase domain of PTPRD, PTPRF and PTPRS. Interacts with KIF1A; the interaction decreases in presence of calcium.

The protein localises to the cytoplasm. The protein resides in the cell surface. It localises to the cell projection. Its subcellular location is the dendritic spine. In terms of biological role, alters PTPRF cellular localization and induces PTPRF clustering. May regulate the disassembly of focal adhesions. May localize receptor-like tyrosine phosphatases type 2A at specific sites on the plasma membrane, possibly regulating their interaction with the extracellular environment and their association with substrates. In neuronal cells, is a scaffolding protein in the dendritic spines which acts as immobile postsynaptic post able to recruit KIF1A-driven dense core vesicles to dendritic spines. This chain is Liprin-alpha-2 (Ppfia2), found in Mus musculus (Mouse).